Reading from the N-terminus, the 461-residue chain is Kynurenine 3-monooxygenase (461 aa).

2 helical membrane passes run 395-415 and 432-452; these read GFMN…VTFT and ILSN…AIGI.

Belongs to the aromatic-ring hydroxylase family. KMO subfamily. Requires FAD as cofactor.

Its subcellular location is the mitochondrion. The protein localises to the membrane. It catalyses the reaction L-kynurenine + NADPH + O2 + H(+) = 3-hydroxy-L-kynurenine + NADP(+) + H2O. It participates in cofactor biosynthesis; NAD(+) biosynthesis; quinolinate from L-kynurenine: step 1/3. Catalyzes the hydroxylation of L-kynurenine (L-Kyn) to form 3-hydroxy-L-kynurenine (L-3OHKyn). Required for synthesis of quinolinic acid. This is Kynurenine 3-monooxygenase from Caenorhabditis briggsae.